Here is an 824-residue protein sequence, read N- to C-terminus: Mucosa-associated lymphoid tissue lymphoma translocation protein 1 (824 aa).

Residues 1–27 (MSLLGDPLQALPPSAAPTGPLLAPPAG) are disordered. The residue at position 2 (S2) is an N-acetylserine. A compositionally biased stretch (low complexity) spans 11-27 (LPPSAAPTGPLLAPPAG). The Death domain occupies 39 to 126 (RRLSELLDQA…EVLQLLSPPG (88 aa)). 2 Ig-like C2-type domains span residues 125 to 201 (PGIK…FEFS) and 212 to 305 (PESF…KKVE). At S135 the chain carries Phosphoserine. 2 cysteine pairs are disulfide-bonded: C147-C190 and C248-C290. The caspase-like stretch occupies residues 348–562 (IGNMNYREHP…SLSEKRALTD (215 aa)). The short motif at 369–376 (LTNLLRQL) is the Nuclear export signal element. Active-site residues include H415 and C464.

Belongs to the peptidase C14B family. In terms of assembly, homooligomer; forms oligomers which bind to TRAF6. Forms a complex with CARD14 and MALT1; resulting in the formation of a CBM (CARD14-BCL10-MALT1) complex. Forms a complex with CARD11 and MALT1; resulting in the formation of a CBM (CARD11-BCL10-MALT1) complex. Forms a complex with CARD9 and MALT1; resulting in the formation of a CBM (CARD9-BCL10-MALT1) complex. In terms of tissue distribution, highly expressed in peripheral blood mononuclear cells. Detected at lower levels in bone marrow, thymus and lymph node, and at very low levels in colon and lung.

Its subcellular location is the cytoplasm. The protein resides in the perinuclear region. It is found in the nucleus. Its function is as follows. Protease that enhances BCL10-induced activation: acts via formation of CBM complexes that channel adaptive and innate immune signaling downstream of CARD domain-containing proteins (CARD9, CARD11 and CARD14) to activate NF-kappa-B and MAP kinase p38 pathways which stimulate expression of genes encoding pro-inflammatory cytokines and chemokines. Mediates BCL10 cleavage: MALT1-dependent BCL10 cleavage plays an important role in T-cell antigen receptor-induced integrin adhesion. Involved in the induction of T helper 17 cells (Th17) differentiation. Cleaves RC3H1 and ZC3H12A in response to T-cell receptor (TCR) stimulation which releases their cooperatively repressed targets to promote Th17 cell differentiation. Also mediates cleavage of N4BP1 in T-cells following TCR-mediated activation, leading to N4BP1 inactivation. May also have ubiquitin ligase activity: binds to TRAF6, inducing TRAF6 oligomerization and activation of its ligase activity. The polypeptide is Mucosa-associated lymphoid tissue lymphoma translocation protein 1 (Homo sapiens (Human)).